A 290-amino-acid chain; its full sequence is tRNA-cytidine(32) 2-sulfurtransferase (290 aa).

Residues 66–71 (SGGKDS) carry the PP-loop motif motif. [4Fe-4S] cluster contacts are provided by Cys141, Cys144, and Cys232.

The protein belongs to the TtcA family. In terms of assembly, homodimer. Mg(2+) is required as a cofactor. The cofactor is [4Fe-4S] cluster.

The protein localises to the cytoplasm. The enzyme catalyses cytidine(32) in tRNA + S-sulfanyl-L-cysteinyl-[cysteine desulfurase] + AH2 + ATP = 2-thiocytidine(32) in tRNA + L-cysteinyl-[cysteine desulfurase] + A + AMP + diphosphate + H(+). Its pathway is tRNA modification. Catalyzes the ATP-dependent 2-thiolation of cytidine in position 32 of tRNA, to form 2-thiocytidine (s(2)C32). The sulfur atoms are provided by the cysteine/cysteine desulfurase (IscS) system. This Rhizobium etli (strain ATCC 51251 / DSM 11541 / JCM 21823 / NBRC 15573 / CFN 42) protein is tRNA-cytidine(32) 2-sulfurtransferase.